The chain runs to 768 residues: Tripartite motif-containing protein 67 (768 aa).

Residues 7-42 form an RING-type; degenerate zinc finger; it reads CPVCGSLFREPIILPCSHNVCLPCARTIAVQTPDGE. Over residues 55-70 the composition is skewed to low complexity; it reads AAAAATPPDQDAAAGA. Disordered regions lie at residues 55–74 and 247–284; these read AAAAATPPDQDAAAGATSGG and QPPPPPTPPEATPAVTGTSTASSAGGCRSPGGAGASAP. Residues 201-248 form a B box-type 1; degenerate zinc finger; that stretch reads AICQLCDRTPPEPAATLCEQCDVLYCATCQLKCHPSRGPFAKHRLVQP. Residues 247-257 are compositionally biased toward pro residues; that stretch reads QPPPPPTPPEA. A B box-type 2 zinc finger spans residues 285–327; the sequence is RKFPTCPEHEMENYSMYCVSCRSPVCYMCLEEGRHSKHEVKPL. Residues Cys-290, His-293, Cys-313, and His-319 each coordinate Zn(2+). Residues 332–369 are a coiled coil; sequence KQHKAQLSQALNGVSDKAKEAKEFLVQLKNILQQIQEN. The COS domain occupies 435 to 493; that stretch reads IKEDDPSGFLQISDALIKRVQTSQEQWVKGALEPKVSAEFDLTLDSEPLLQAIHQLDFV. Residues 498–592 enclose the Fibronectin type-III domain; it reads PPVPLLQLEK…KTVVLQTSDV (95 aa). The region spanning 574-765 is the B30.2/SPRY domain; the sequence is NSSGVGPYSK…VPTNLGRPKL (192 aa).

Its subcellular location is the cytoplasm. The protein localises to the cytoskeleton. In Mus musculus (Mouse), this protein is Tripartite motif-containing protein 67 (Trim67).